The primary structure comprises 442 residues: ATP-dependent protease ATPase subunit HslU (442 aa).

ATP-binding positions include Ile-18, 60 to 65 (GVGKTE), Asp-255, Glu-320, and Arg-392.

Belongs to the ClpX chaperone family. HslU subfamily. In terms of assembly, a double ring-shaped homohexamer of HslV is capped on each side by a ring-shaped HslU homohexamer. The assembly of the HslU/HslV complex is dependent on binding of ATP.

The protein resides in the cytoplasm. Functionally, ATPase subunit of a proteasome-like degradation complex; this subunit has chaperone activity. The binding of ATP and its subsequent hydrolysis by HslU are essential for unfolding of protein substrates subsequently hydrolyzed by HslV. HslU recognizes the N-terminal part of its protein substrates and unfolds these before they are guided to HslV for hydrolysis. The chain is ATP-dependent protease ATPase subunit HslU from Shewanella sp. (strain W3-18-1).